The chain runs to 1823 residues: THO complex subunit 2 (1823 aa).

A coiled-coil region spans residues 935-1003 (NRYESEISKQ…RRRLSREKDT (69 aa)). The Nuclear localization signal motif lies at 964-969 (KRKKEK). Disordered regions lie at residues 1244–1382 (LVGV…KDLN) and 1394–1823 (ALSS…GSRE). Basic and acidic residues-rich tracts occupy residues 1272 to 1283 (QMLKTKPLDGRT), 1312 to 1330 (KSMEQKETDETPRISDENP), and 1356 to 1367 (AKQDFGKDDGKS). A compositionally biased stretch (polar residues) spans 1394 to 1409 (ALSSTAANGSIATGSS). Residues 1432-1596 (PRHEIVTSVR…EKSHPDDHFH (165 aa)) show a composition bias toward basic and acidic residues. Residues 1600-1610 (LPPPPPLPPNI) are compositionally biased toward pro residues. Basic and acidic residues-rich tracts occupy residues 1616–1625 (AAKEDLERRA), 1636–1648 (PRHEEREKRRSEE), 1655–1706 (DDAK…FEAS), and 1768–1785 (LGKEASSKMARRDPDPIA). Phosphoserine is present on residues Ser-1646 and Ser-1696. Over residues 1802-1816 (MTVNGKTTRGEQSGS) the composition is skewed to polar residues.

Belongs to the THOC2 family. In terms of assembly, component of the THO complex, which is composed of THO1, THO2, THO3, THO5, THO6 and THO7.

The protein localises to the nucleus. In terms of biological role, acts as a component of the THO subcomplex of the TREX complex which is thought to couple mRNA transcription, processing and nuclear export. This Arabidopsis thaliana (Mouse-ear cress) protein is THO complex subunit 2 (THO2).